The primary structure comprises 410 residues: Peptidase T (410 aa).

His-79 is a binding site for Zn(2+). The active site involves Asp-81. Asp-142 is a binding site for Zn(2+). The Proton acceptor role is filled by Glu-176. 3 residues coordinate Zn(2+): Glu-177, Asp-199, and His-381.

This sequence belongs to the peptidase M20B family. Zn(2+) serves as cofactor.

The protein resides in the cytoplasm. It carries out the reaction Release of the N-terminal residue from a tripeptide.. Its function is as follows. Cleaves the N-terminal amino acid of tripeptides. The polypeptide is Peptidase T (Bacillus pumilus (strain SAFR-032)).